A 278-amino-acid chain; its full sequence is HCLS1-associated protein X-1 (278 aa).

The residue at position 2 (serine 2) is an N-acetylserine. The tract at residues 2–43 (SVFDLFRGFFGFPGPRSHRDPFFGGMTRDDDDDEDDEEEEDS) is required for localization in mitochondria. 2 disordered regions span residues 15–50 (GPRS…GRES) and 99–262 (LPSH…ALDD). Residues 30–43 (DDDDDEDDEEEEDS) are compositionally biased toward acidic residues. An involved in HCLS1 binding region spans residues 113–278 (TPGVRLREGQ…LLLGRWFRSR (166 aa)). The span at 132 to 152 (PDSHQPRIFEGVLESHAKPES) shows a compositional bias: basic and acidic residues. The tract at residues 174–205 (VSPHSRAREDKDLDSQVSQEGLGPLLQPQPKS) is involved in CASP9 binding. The segment at 175-246 (SPHSRAREDK…TTVTHQEAHD (72 aa)) is involved in GNA13 binding. The tract at residues 182 to 278 (EDKDLDSQVS…LLLGRWFRSR (97 aa)) is required for localization in sarcoplasmic reticulum. The interval 183-278 (DKDLDSQVSQ…LLLGRWFRSR (96 aa)) is involved in PKD2 binding. Residues serine 188 and serine 191 each carry the phosphoserine modification. The involved in PLN binding stretch occupies residues 202 to 224 (QPKSYFKSISVTKITKPDGTVEE). Residues 202 to 244 (QPKSYFKSISVTKITKPDGTVEEHRTVVDSEGRRETTVTHQEA) are involved in ATP2A2 binding. Residues 209–278 (SISVTKITKP…LLLGRWFRSR (70 aa)) form a mediates interaction with UCP3 region. Residues 216–254 (TKPDGTVEEHRTVVDSEGRRETTVTHQEAHDSSRSDPDP) are compositionally biased toward basic and acidic residues. The segment at 269 to 278 (LLLGRWFRSR) is required for ITGB6 binding.

Belongs to the HAX1 family. In terms of assembly, interacts with ABCB1, ABCB4 and ABCB11. Directly associates with HCLS1/HS1, through binding to its N-terminal region. Interacts with CTTN. Interacts with PKD2. Interacts with GNA13. Interacts with CASP9. Interacts with ITGB6. Interacts with PLN and ATP2A2; these interactions are inhibited by calcium. Interacts with GRB7. Interacts (via C-terminus) with XIAP/BIRC4 (via BIR 2 domain and BIR 3 domain) and this interaction blocks ubiquitination of XIAP/BIRC4. Interacts with TPC2. Interacts with KCNC3. Interacts with XPO1. Interacts with RNF217. Interacts with UCP3; the interaction is direct and calcium-dependent. Interacts with MAPRE2; this interaction regulates cell migration in keratinocytes. In terms of tissue distribution, present in striated muscles (at protein level).

It is found in the mitochondrion matrix. The protein resides in the endoplasmic reticulum. It localises to the nucleus membrane. The protein localises to the cytoplasmic vesicle. Its subcellular location is the cytoplasm. It is found in the cell cortex. The protein resides in the cell membrane. It localises to the sarcoplasmic reticulum. The protein localises to the P-body. Its subcellular location is the nucleus. Functionally, recruits the Arp2/3 complex to the cell cortex and regulates reorganization of the cortical actin cytoskeleton via its interaction with KCNC3 and the Arp2/3 complex. Slows down the rate of inactivation of KCNC3 channels. Promotes GNA13-mediated cell migration. Involved in the clathrin-mediated endocytosis pathway. May be involved in internalization of ABC transporters such as ABCB11. May inhibit CASP9 and CASP3. Promotes cell survival. May regulate intracellular calcium pools. The polypeptide is HCLS1-associated protein X-1 (Hax1) (Rattus norvegicus (Rat)).